We begin with the raw amino-acid sequence, 187 residues long: Peptidyl-tRNA hydrolase (187 aa).

Y15 is a tRNA binding site. The active-site Proton acceptor is the H20. The tRNA site is built by F64, N66, and N112.

Belongs to the PTH family. In terms of assembly, monomer.

It localises to the cytoplasm. It carries out the reaction an N-acyl-L-alpha-aminoacyl-tRNA + H2O = an N-acyl-L-amino acid + a tRNA + H(+). Hydrolyzes ribosome-free peptidyl-tRNAs (with 1 or more amino acids incorporated), which drop off the ribosome during protein synthesis, or as a result of ribosome stalling. Its function is as follows. Catalyzes the release of premature peptidyl moieties from peptidyl-tRNA molecules trapped in stalled 50S ribosomal subunits, and thus maintains levels of free tRNAs and 50S ribosomes. The chain is Peptidyl-tRNA hydrolase from Bacteroides fragilis (strain ATCC 25285 / DSM 2151 / CCUG 4856 / JCM 11019 / LMG 10263 / NCTC 9343 / Onslow / VPI 2553 / EN-2).